The sequence spans 1580 residues: Ras GTPase-activating protein raskol (1580 aa).

Ser164 carries the phosphoserine modification. Thr167 carries the post-translational modification Phosphothreonine. The segment at 197 to 223 (LKRTKSVTKLERTKRGSGGLRGSRSHE) is disordered. A phosphoserine mark is found at Ser221 and Ser224. One can recognise a PH domain in the interval 233–291 (STIDLSCTGAVGVAPVHQSVLGRRHCFQVRGGPRGERYYSCGSRQERDLWIYSLRKSIA). Residues 282–400 (WIYSLRKSIA…TSRLPCEQWY (119 aa)) form the C2 domain. The region spanning 490 to 700 (GLAGAFLTDV…ARMQQFLEII (211 aa)) is the Ras-GAP domain. Disordered stretches follow at residues 764–819 (GMGT…QPQH), 857–892 (LLQQQQQQQQQQQQQQQQHQQLQQHGHQQQPHHQHP), 904–1023 (AGNQ…SYDD), 1112–1218 (ANHH…QQFG), 1284–1313 (LSGGSSSSTSASASTSNLGKSGGSSAYGRL), 1334–1443 (VGYG…LGKS), and 1561–1580 (YETQQQQQQHQAPPKTQKPQ). The span at 776 to 805 (ATSSTHSIASENQENRNPGSSGSHAGSNSE) shows a compositional bias: polar residues. 3 stretches are compositionally biased toward low complexity: residues 806–818 (QLLPQQSQLAQPQ), 857–885 (LLQQQQQQQQQQQQQQQQHQQLQQHGHQQ), and 926–939 (SSSLNGSSSNLLHG). The segment covering 940–954 (HQQHAHHPQQLHPHH) has biased composition (basic residues). The span at 987–1020 (TSTPSSTRSRTLPRNGNPNANGNVGSSNNNQSGS) shows a compositional bias: low complexity. Polar residues predominate over residues 1140–1150 (SAKSSHCSSGY). Over residues 1151-1169 (QSISTNPSPSQSSSPVESQ) the composition is skewed to low complexity. A phosphoserine mark is found at Ser1158 and Ser1164. A compositionally biased stretch (polar residues) spans 1186-1206 (PSYQLQPQTGSSRSSAQSNTH). 3 stretches are compositionally biased toward low complexity: residues 1207-1216 (QQQQQQQQQQ), 1285-1299 (SGGSSSSTSASASTS), and 1351-1362 (HQQQQNPMQQQQ). Residues 1363-1372 (QRERDQEHKQ) show a composition bias toward basic and acidic residues. Positions 1374 to 1388 (AGSVAGSVGSATSAA) are enriched in low complexity. The segment covering 1396–1415 (SARTLSDSSTDTEGHCNQLQ) has biased composition (polar residues). 2 positions are modified to phosphoserine: Ser1401 and Ser1403. A compositionally biased stretch (gly residues) spans 1427 to 1438 (GGSGGGGAGSEQ). A compositionally biased stretch (low complexity) spans 1563–1580 (TQQQQQQHQAPPKTQKPQ).

It is found in the cytoplasm. The protein localises to the cell membrane. It localises to the apical cell membrane. GTPase-activating protein, which acts as a negative regulator for some members of the Ras family. Probably decreases their signaling activity by stimulating their intrinsic GTPase activity, thereby lowering the levels of the GTP-bound active form. Functions with DE-cadherin (shg) to promote embryonic border cell (BC) migration and adhesion by regulating the distribution of actin protrusions in BCs. Promotes shg-mediated adhesion at the BC interfaces and likely maintains BC cluster adhesion during BC detachment from the follicular epithelium and subsequent BC migration. Also required for restricting the development of actin-rich protrusions to the front of migrating BC clusters thus ensuring unidirectional BC migration. Possibly functions by suppressing Rac1 signaling in non-leading BCs, thus limiting its activity to leading BCs where it initiates localized actin cytoskeleton remodeling to produce the polarized protrusions. The chain is Ras GTPase-activating protein raskol from Drosophila melanogaster (Fruit fly).